A 130-amino-acid chain; its full sequence is Small ribosomal subunit protein uS8 (130 aa).

K88 bears the N6-succinyllysine mark.

The protein belongs to the universal ribosomal protein uS8 family. As to quaternary structure, component of the 40S ribosomal subunit. Part of the small subunit (SSU) processome, composed of more than 70 proteins and the RNA chaperone small nucleolar RNA (snoRNA) U3.

It localises to the cytoplasm. Its subcellular location is the nucleus. The protein localises to the nucleolus. Its function is as follows. Component of the small ribosomal subunit. Part of the small subunit (SSU) processome, first precursor of the small eukaryotic ribosomal subunit. During the assembly of the SSU processome in the nucleolus, many ribosome biogenesis factors, an RNA chaperone and ribosomal proteins associate with the nascent pre-rRNA and work in concert to generate RNA folding, modifications, rearrangements and cleavage as well as targeted degradation of pre-ribosomal RNA by the RNA exosome. Required for proper erythropoiesis. The protein is Small ribosomal subunit protein uS8 (RPS15A) of Pongo abelii (Sumatran orangutan).